We begin with the raw amino-acid sequence, 249 residues long: Nicotinamide/nicotinic acid mononucleotide adenylyltransferase (249 aa).

NAD(+) is bound by residues serine 34 and phenylalanine 35. ATP contacts are provided by histidine 42 and lysine 75. Residues threonine 112, glycine 141, aspartate 143, tryptophan 154, arginine 173, and asparagine 204 each contribute to the NAD(+) site. 209–210 serves as a coordination point for ATP; sequence SR.

It belongs to the eukaryotic NMN adenylyltransferase family. It depends on a divalent metal cation as a cofactor.

It carries out the reaction beta-nicotinamide D-ribonucleotide + ATP + H(+) = diphosphate + NAD(+). It catalyses the reaction nicotinate beta-D-ribonucleotide + ATP + H(+) = deamido-NAD(+) + diphosphate. It functions in the pathway cofactor biosynthesis; NAD(+) biosynthesis; deamido-NAD(+) from nicotinate D-ribonucleotide: step 1/1. It participates in cofactor biosynthesis; NAD(+) biosynthesis; NAD(+) from nicotinamide D-ribonucleotide: step 1/1. Its function is as follows. Catalyzes the formation of NAD(+) from nicotinamide mononucleotide (NMN) and ATP. Can also use the deamidated form; nicotinic acid mononucleotide (NaMN) as substrate. This Oryza sativa subsp. japonica (Rice) protein is Nicotinamide/nicotinic acid mononucleotide adenylyltransferase.